A 187-amino-acid chain; its full sequence is Alpha-D-galactose-binding lectin (187 aa).

The first 37 residues, 1-37 (MTFAKQSCFNSIILLSIATSYFKIGHKISELGNRIEK), serve as a signal peptide directing secretion. T39 is subject to N-acetylthreonine. Residues 53–56 (HPKG), D64, 72–76 (DIHER), H101, G104, E112, 120–122 (DRH), H145, G148, E156, and 164–166 (DKH) each bind N-acetyl-alpha-D-galactosamine.

As to quaternary structure, homodimer. As to expression, highest expression in the posterior part of the mantle. Highly expressed in gills and to a lesser extent in mid mantle and anterior muscle. Lowest expression in digestive gland and posterior adductor muscle. Scarcely detectable in hemocytes.

Its activity is regulated as follows. Agglutination of E.coli is inhibited by alpha-galactoside melibiose, but not by beta-galactoside lactose. Its function is as follows. Alpha-D-galactose-binding lectin. Binds D-GalNAc, but not glucose or its derivatives. Has hemagglutinating activity towards rabbit erythrocytes. Agglutinates bacteria. Has bacteriostatic activity on both Gram-positive and Gram-negative bacteria including B.subtilis, S.aureus, E.coli and V.parahaemolyticus, respectively. Has a dose-dependent cytotoxic effect on the human globotriaosylceramide (Gb3)-expressing Epstein-Barr virus (EBV)-positive Burkitt's lymphoma (Raji) cell line. Has dose-dependent cytotoxic effect on another Burkitt's lymphoma (Ramos) cell line, which does not possess the EBV genome, but also expresses Gb3. Binds to Gb3 in these cells leading to phosphorylation of MEK1/2, ERK1/2, JNK and p38 kinase, activation of caspase-9/3 and to expression of p21 and tumor necrosis factor (TNF)-alpha. No cytotoxic effect on the human chronic myelogenous leukemia (K-562) cell line, which does not express Gb3. May be involved in innate immunity acting as an antibacterial or antifungal agent. May be a pattern recognition receptor (PRR) involved in recognition of glycans found on parasitic or symbiotic microorganisms. The chain is Alpha-D-galactose-binding lectin from Mytilus galloprovincialis (Mediterranean mussel).